A 383-amino-acid chain; its full sequence is tRNA-specific 2-thiouridylase MnmA (383 aa).

ATP contacts are provided by residues 16-23 (AMSGGVDS) and leucine 42. Cysteine 110 functions as the Nucleophile in the catalytic mechanism. Residues cysteine 110 and cysteine 209 are joined by a disulfide bond. Glycine 134 provides a ligand contact to ATP. Residues 159 to 161 (KDQ) form an interaction with tRNA region. The active-site Cysteine persulfide intermediate is the cysteine 209.

The protein belongs to the MnmA/TRMU family.

The protein localises to the cytoplasm. The enzyme catalyses S-sulfanyl-L-cysteinyl-[protein] + uridine(34) in tRNA + AH2 + ATP = 2-thiouridine(34) in tRNA + L-cysteinyl-[protein] + A + AMP + diphosphate + H(+). Its function is as follows. Catalyzes the 2-thiolation of uridine at the wobble position (U34) of tRNA, leading to the formation of s(2)U34. The polypeptide is tRNA-specific 2-thiouridylase MnmA (Caulobacter vibrioides (strain ATCC 19089 / CIP 103742 / CB 15) (Caulobacter crescentus)).